The following is a 67-amino-acid chain: Large ribosomal subunit protein bL35 (67 aa).

Residues 1–20 are disordered; it reads MPKLKTKSGAKKRFVPKKSG.

Belongs to the bacterial ribosomal protein bL35 family.

The polypeptide is Large ribosomal subunit protein bL35 (Anaeromyxobacter dehalogenans (strain 2CP-C)).